A 78-amino-acid chain; its full sequence is Large ribosomal subunit protein bL28 (78 aa).

The segment at 1 to 21 is disordered; the sequence is MSRVCQVTGKKPMVGNNRSHA.

Belongs to the bacterial ribosomal protein bL28 family.

The chain is Large ribosomal subunit protein bL28 from Shewanella piezotolerans (strain WP3 / JCM 13877).